The primary structure comprises 347 residues: NADH-ubiquinone oxidoreductase chain 2 (347 aa).

Helical transmembrane passes span 4-21 (LALI…VIVM), 26-44 (WLLV…IPVL), 59-79 (YFLT…TNLL), 93-115 (LAST…HFWV), 149-169 (LNLN…GWGG), 178-198 (ILAY…TYNP), 200-220 (LTLL…MLFM), 241-261 (ATSV…SGFL), 274-294 (ESIF…YFYM), and 323-343 (TPLL…APIL).

The protein belongs to the complex I subunit 2 family. Core subunit of respiratory chain NADH dehydrogenase (Complex I) which is composed of 45 different subunits. Interacts with TMEM242.

It is found in the mitochondrion inner membrane. It catalyses the reaction a ubiquinone + NADH + 5 H(+)(in) = a ubiquinol + NAD(+) + 4 H(+)(out). In terms of biological role, core subunit of the mitochondrial membrane respiratory chain NADH dehydrogenase (Complex I) which catalyzes electron transfer from NADH through the respiratory chain, using ubiquinone as an electron acceptor. Essential for the catalytic activity and assembly of complex I. The protein is NADH-ubiquinone oxidoreductase chain 2 of Cardioderma cor (Heart-nosed bat).